A 194-amino-acid polypeptide reads, in one-letter code: Putative NAD(P)H nitroreductase YfhC (194 aa).

FMN contacts are provided by residues 20–22 (RRS), 147–148 (KI), and Arg188.

This sequence belongs to the nitroreductase family. It depends on FMN as a cofactor.

In Bacillus subtilis (strain 168), this protein is Putative NAD(P)H nitroreductase YfhC (yfhC).